The sequence spans 430 residues: Serine--tRNA ligase (430 aa).

237 to 239 contacts L-serine; the sequence is TAE. Residue 268 to 270 participates in ATP binding; that stretch reads RSE. Glu-291 contacts L-serine. Position 355–358 (355–358) interacts with ATP; that stretch reads EISS. Ser-391 contributes to the L-serine binding site.

It belongs to the class-II aminoacyl-tRNA synthetase family. Type-1 seryl-tRNA synthetase subfamily. Homodimer. The tRNA molecule binds across the dimer.

The protein resides in the cytoplasm. It carries out the reaction tRNA(Ser) + L-serine + ATP = L-seryl-tRNA(Ser) + AMP + diphosphate + H(+). It catalyses the reaction tRNA(Sec) + L-serine + ATP = L-seryl-tRNA(Sec) + AMP + diphosphate + H(+). The protein operates within aminoacyl-tRNA biosynthesis; selenocysteinyl-tRNA(Sec) biosynthesis; L-seryl-tRNA(Sec) from L-serine and tRNA(Sec): step 1/1. Catalyzes the attachment of serine to tRNA(Ser). Is also able to aminoacylate tRNA(Sec) with serine, to form the misacylated tRNA L-seryl-tRNA(Sec), which will be further converted into selenocysteinyl-tRNA(Sec). The chain is Serine--tRNA ligase from Escherichia fergusonii (strain ATCC 35469 / DSM 13698 / CCUG 18766 / IAM 14443 / JCM 21226 / LMG 7866 / NBRC 102419 / NCTC 12128 / CDC 0568-73).